The chain runs to 144 residues: Endoribonuclease YbeY (144 aa).

Zn(2+) is bound by residues His-105, His-109, and Asp-115.

This sequence belongs to the endoribonuclease YbeY family. Zn(2+) is required as a cofactor.

The protein resides in the cytoplasm. Functionally, single strand-specific metallo-endoribonuclease involved in late-stage 70S ribosome quality control and in maturation of the 3' terminus of the 16S rRNA. In Chlorobium limicola (strain DSM 245 / NBRC 103803 / 6330), this protein is Endoribonuclease YbeY.